The primary structure comprises 390 residues: 5-hydroxytryptamine receptor 1B (390 aa).

The Extracellular segment spans residues 1–46 (MEEPGAQCAPPXPAGSETWVPQANLSSAPSQNCSAKDYIYQDSIAL). N-linked (GlcNAc...) asparagine glycosylation is found at Asn-24 and Asn-32. A helical membrane pass occupies residues 47–72 (PWKVLLVMLLALITLATTLSNAFVIA). The Cytoplasmic segment spans residues 73-86 (TVYRTRKLHTPANY). A helical transmembrane segment spans residues 87-111 (LIASLAVTDLLVSILVMPISTMYTV). Residues 112 to 119 (TGRWTLGQ) lie on the Extracellular side of the membrane. The helical transmembrane segment at 120–145 (VVCDFWLSSDITCCTASILHLCVIAL) threads the bilayer. The cysteines at positions 122 and 199 are disulfide-linked. The ergotamine site is built by Asp-129 and Thr-134. Positions 146–148 (DRY) match the DRY motif; important for ligand-induced conformation changes and signaling motif. At 146 to 165 (DRYWAITDAVEYSAKRTPKR) the chain is on the cytoplasmic side. The chain crosses the membrane as a helical span at residues 166 to 184 (AAVMIALVWVFSISISLPP). Residues 185–205 (FFWRQAKAEEEVSECVVNTDH) are Extracellular-facing. Val-201 is an ergotamine binding site. A helical transmembrane segment spans residues 206–229 (ILYTVYSTVGAFYFPTLLLIALYG). Topologically, residues 230–315 (RIYVEARSRI…AARERKATKT (86 aa)) are cytoplasmic. The span at 259–272 (DSPGSTSSVTSINS) shows a compositional bias: polar residues. Residues 259-281 (DSPGSTSSVTSINSRVPDVPSES) form a disordered region. A helical membrane pass occupies residues 316-337 (LGIILGAFIVCWLPFFIISLVM). Topologically, residues 338-347 (PICKDACWFH) are extracellular. A helical membrane pass occupies residues 348-370 (LAIFDFFTWLGYLNSLINPIIYT). The short motif at 365–369 (NPIIY) is the NPxxY motif; important for ligand-induced conformation changes and signaling element. Over 371-390 (MSNEDFKQAFHKLIRFKCTS) the chain is Cytoplasmic. Cys-388 is lipidated: S-palmitoyl cysteine.

The protein belongs to the G-protein coupled receptor 1 family. Homodimer. Heterodimer with HTR1D. In terms of processing, phosphorylated. Desensitization of the receptor may be mediated by its phosphorylation. Palmitoylated.

It localises to the cell membrane. Functionally, G-protein coupled receptor for 5-hydroxytryptamine (serotonin). Also functions as a receptor for ergot alkaloid derivatives, various anxiolytic and antidepressant drugs and other psychoactive substances, such as lysergic acid diethylamide (LSD). Ligand binding causes a conformation change that triggers signaling via guanine nucleotide-binding proteins (G proteins) and modulates the activity of downstream effectors, such as adenylate cyclase. HTR1B is coupled to G(i)/G(o) G alpha proteins and mediates inhibitory neurotransmission by inhibiting adenylate cyclase activity. Arrestin family members inhibit signaling via G proteins and mediate activation of alternative signaling pathways. Regulates the release of 5-hydroxytryptamine, dopamine and acetylcholine in the brain, and thereby affects neural activity, nociceptive processing, pain perception, mood and behavior. Besides, plays a role in vasoconstriction of cerebral arteries. The chain is 5-hydroxytryptamine receptor 1B (HTR1B) from Gorilla gorilla gorilla (Western lowland gorilla).